We begin with the raw amino-acid sequence, 518 residues long: Coiled-coil domain-containing protein 82 (518 aa).

Residues 1-14 (MVHVRRHETRKNSK) show a composition bias toward basic residues. Residues 1–266 (MVHVRRHETR…EDDYRYDEDG (266 aa)) form a disordered region. Basic and acidic residues predominate over residues 16 to 27 (QKPEQKSRVDWH). A compositionally biased stretch (acidic residues) spans 38 to 67 (DSDEELDSNEELDSDEEHDSGESIDSDEEL). Residues 68 to 89 (DISKKSDINELPEKETELKLIK) are compositionally biased toward basic and acidic residues. Over residues 92–107 (SQGSNSKHLTNTSNSS) the composition is skewed to polar residues. The span at 111 to 127 (EQLKETKHNDLPDDEAH) shows a compositional bias: basic and acidic residues. Phosphoserine is present on residues serine 170 and serine 194. Positions 191–201 (DECSSLEMEQE) are enriched in acidic residues. Threonine 202 carries the phosphothreonine modification. Residues 204 to 232 (EKSSAARKREYHQKLQELSERSRQRRRRN) adopt a coiled-coil conformation. Residues 215-225 (HQKLQELSERS) are compositionally biased toward basic and acidic residues. The segment covering 249–266 (GEEDEDEDEDDYRYDEDG) has biased composition (acidic residues). The residue at position 305 (serine 305) is a Phosphoserine.

This chain is Coiled-coil domain-containing protein 82 (Ccdc82), found in Mus musculus (Mouse).